The sequence spans 307 residues: Nuclear polyadenylated RNA-binding protein nab2 (307 aa).

Residues 102 to 135 (STDKSQQSFSVPETSIQPQSSQTPNITSLREEKE) form a disordered region. Residues 105–129 (KSQQSFSVPETSIQPQSSQTPNITS) show a composition bias toward polar residues. 3 C3H1-type zinc fingers span residues 178–202 (TQEVPLCKYADKCSRANCIFAHPTP), 217–232 (CASGKECKAADCVKGH), and 254–268 (CKYKPCLNPACRFIH). A disordered region spans residues 274–307 (NMTWRPPSKTEETSLSERSFAVNESEEQLHVPSV).

Belongs to the ZC3H14 family.

It localises to the nucleus. RNA-binding protein involved in RNA processing. Acts as a regulator of mRNA stability: binds to mRNAs and pre-mRNAs, preventing their degradation. Involved in the biogenesis of circular RNAs (circRNAs) which are produced by back-splicing circularization of pre-mRNAs. This Schizosaccharomyces pombe (strain 972 / ATCC 24843) (Fission yeast) protein is Nuclear polyadenylated RNA-binding protein nab2.